We begin with the raw amino-acid sequence, 1021 residues long: MAMLLPQNPSQVHAAAVNGDKNTLHKLITESALRDSEDQFGRTPLMYCVLADRLDCAEVLLKAGAGINKTDHSQRTALHLAAQKGNVRFMKLLLSRHADWRLKDLEEMTPLHLASRHSSSKPLSLLLKHMAPGEVDTQDRNKQTALHWSAFYNHPEHVKLLIKHDSNIGIPDSEGKIPLHWAAHNKHPNATRTVRCILEAAPTESLLNWQDYEGRTPLHFAVADGNEAVVEVLTSYEGCSVTAYDNLFRTPLHWAALLGHAKIVHLLLERNKSGMIPSDSQGATPLHYGAQSNFADTVAVFLKHHSVRDEPDLEGRTAFMWAAGKGSNDVIKIMLDLKKDIDINMTDKYGGTALHAAALSGHVSTVRLLLEQGGMVDPLDVMKHTPLFRACEMGHRDVILTLIKGGARVDLVDIDGHSALHWAALGGNAEVCEVLMENGISPNLQDQAGRTPLQCAAYAGYINCMALLIQHDADPNIQDKEGRTALHWSCNNGYLDAVKLLLGCGAFPNHMEHTEERYTPLDYALLGEHQELTQFLLEHGALSIAAIQDIAASSIQALYKGYKVRRAFRERKKLLMRHEQLRKDAAKKREEERRREAEQQLSFAEAGQKQRVLLAAVGVEKLSLDEAEQRVKDSVAAKGHKHKKSSSAHNSQSRREKPSRAERRTREPETSDAPSIRSLPPVTPMSTKKCPVTREEVCVRETFGPDTGISLNCGSANERRSPAGSSRPGSAKPVHTGTHVAPGHMETTPTPKPRPSTTGAHSKNASQDTPQHNETQTTSKGNKPISEHKPTGSQPSNNTSVTRQKEKRQEKETHREKDKRSRTEGDKQTVREKQKGTGIERAKERLMGRTRKKLAEKEKEKKKDGTCSKNQAAVVIQRAWRRSCVRGRIRKVLCRSLKGVESAEATALLIQLLWEWPVLHDHTHRKPSDVQAPPTRIAGKKSSVLQNIYGAAPSKRGTSLRAAALKTQSQSQSQVLLDLSLRTHKQLSAVECVNLVDSVSQAKQFSYHLRPSSGASQSSQN.

ANK repeat units follow at residues 7-36 (QNPS…LRDS), 40-69 (FGRT…GINK), 73-102 (SQRT…DWRL), 106-137 (EEMT…EVDT), 141-170 (NKQT…NIGI), 174-206 (EGKI…TESL), 213-243 (EGRT…SVTA), 247-276 (LFRT…SGMI), 281-310 (QGAT…VRDE), 314-343 (EGRT…DIDI), 349-378 (YGGT…MVDP), 382-411 (MKHT…RVDL), 415-444 (DGHS…SPNL), 448-477 (AGRT…DPNI), 481-510 (EGRT…FPNH), and 516-546 (ERYT…SIAA). The D-box 1 motif lies at 483-491 (RTALHWSCN). Positions 548 to 577 (QDIAASSIQALYKGYKVRRAFRERKKLLMR) constitute an IQ 1 domain. 2 stretches are compositionally biased toward basic and acidic residues: residues 579–598 (EQLR…REAE) and 653–669 (SRRE…REPE). Disordered stretches follow at residues 579–602 (EQLR…QQLS), 632–691 (KDSV…KKCP), and 704–868 (GPDT…GTCS). The span at 722-731 (PAGSSRPGSA) shows a compositional bias: low complexity. Polar residues-rich tracts occupy residues 759 to 781 (GAHS…TSKG) and 791 to 802 (TGSQPSNNTSVT). The segment covering 803–866 (RQKEKRQEKE…KEKEKKKDGT (64 aa)) has biased composition (basic and acidic residues). The D-box 2 signature appears at 862–870 (KKDGTCSKN). An IQ 2 domain is found at 869–898 (KNQAAVVIQRAWRRSCVRGRIRKVLCRSLK).

In terms of assembly, binds calmodulin via its IQ domains.

It localises to the cytoplasm. The protein localises to the cytoskeleton. Required for normal renal development and establishment of left-right axis. Probably acts as a molecular switch between different Wnt signaling pathways. Inhibits the canonical Wnt pathway by targeting cytoplasmic disheveled for degradation by the ubiquitin-proteasome. This suggests that it is required in renal development to oppose the repression of terminal differentiation of tubular epithelial cells by Wnt signaling. The protein is Inversin (invs) of Danio rerio (Zebrafish).